Reading from the N-terminus, the 424-residue chain is S-phase kinase-associated protein 2 (424 aa).

A mediates interaction with hepatitis C virus non-structural protein NS5A region spans residues Met-1–Asp-220. Residues Ser-39–Lys-73 are disordered. Phosphoserine is present on Ser-64. The short motif at Arg-67–Lys-73 is the Nuclear localization signal element. Lys-68 and Lys-71 each carry N6-acetyllysine; by p300/EP300. A phosphoserine mark is found at Ser-72 and Ser-75. Residues Gly-94–Leu-140 form the F-box domain. 10 LRR repeats span residues Val-151–Glu-176, His-177–Gln-204, Asn-210–Arg-234, Leu-235–Arg-257, Leu-258–Thr-284, Thr-286–Arg-308, Cys-309–Glu-330, Leu-334–Leu-356, Ile-359–Leu-378, and Lys-380–Ile-401. Phosphoserine is present on Ser-179. A mediates interaction with IFI27 region spans residues Gly-402 to Leu-424.

As to quaternary structure, part of a SCF(SKP2) complex consisting of CUL1, RBX1, SKP1 and SKP2. Component of a SCF(SKP2)-like complex containing CUL1, SKP1, TRIM21 and SKP2. Interacts directly with CUL1 and SKP1. Interacts with CKS1. Interacts with ASB2 which is the substrate-recognition component of a probable ECS E3 ubiquitin-protein ligase complex; ASB2 is likely to bridge the formation of dimeric E3-ubiquitin-protein ligase complexes composed of an ECS complex and an SCF(SKP2) complex. Interacts with the cyclin-A-CDK2 complex. Interacts with ORC1, phosphorylated CDT1, phosphorylated RBL2, ELF4, phosphorylated RAG2, FOXO1, UBP43, MYC, TOB1, TAL1 and KMT2A/MLL1. Interacts with TRIM21. Interacts with cyclin-E. Interacts with IFI27; promotes the ubiquitin-mediated proteasomal degradation of hepatitis C virus/HCV non-structural protein NS5A. Interacts with CARM1. In terms of assembly, (Microbial infection) Interacts with hepatitis C virus/HCV non-structural protein NS5A; promotes the ubiquitin-mediated proteasomal degradation of NS5A. Post-translationally, phosphorylated on serine and threonine resudues in response to DNA damage, promoting 'Lys-63'-linked ubiquitination of NBN. Ubiquitinated by the APC/C complex, leading to its degradation by the proteasome. Deubiquitinated by USP13. In terms of processing, acetylation at Lys-68 and Lys-71 increases stability through impairment of APC/C-mediated proteolysis and promotes cytoplasmic retention. Deacetylated by SIRT3.

The protein localises to the cytoplasm. Its subcellular location is the nucleus. It participates in protein modification; protein ubiquitination. Its function is as follows. Substrate recognition component of a SCF (SKP1-CUL1-F-box protein) E3 ubiquitin-protein ligase complex which mediates the ubiquitination and subsequent proteasomal degradation of target proteins involved in cell cycle progression, signal transduction and transcription. Specifically recognizes phosphorylated CDKN1B/p27kip and is involved in regulation of G1/S transition. Degradation of CDKN1B/p27kip also requires CKS1. Recognizes target proteins ORC1, CDT1, RBL2, KMT2A/MLL1, CDK9, RAG2, NBN, FOXO1, UBP43, YTHDF2, and probably MYC, TOB1 and TAL1. Degradation of TAL1 also requires STUB1. Recognizes CDKN1A in association with CCNE1 or CCNE2 and CDK2. Promotes ubiquitination and destruction of CDH1 in a CK1-dependent manner, thereby regulating cell migration. Following phosphorylation in response to DNA damage, mediates 'Lys-63'-linked ubiquitination of NBN, promoting ATM recruitment to DNA damage sites and DNA repair via homologous recombination. Functionally, through the ubiquitin-mediated proteasomal degradation of hepatitis C virus non-structural protein 5A, has an antiviral activity towards that virus. The chain is S-phase kinase-associated protein 2 (SKP2) from Homo sapiens (Human).